Here is a 382-residue protein sequence, read N- to C-terminus: SAT4 family membrane protein (382 aa).

The segment at 1 to 22 is disordered; it reads MFGAELVGRETGGQSTDQPYSY. N-linked (GlcNAc...) asparagine glycosylation occurs at Asn78. The next 2 membrane-spanning stretches (helical) occupy residues 80 to 100 and 112 to 132; these read SQIL…LLYL and YLSI…NFFL. Asn147 carries an N-linked (GlcNAc...) asparagine glycan. 3 helical membrane-spanning segments follow: residues 159–179, 192–212, and 228–248; these read ILVT…LPII, LGIS…IMRL, and WYTE…PTFF. An N-linked (GlcNAc...) asparagine glycan is attached at Asn269.

It belongs to the SAT4 family.

Its subcellular location is the membrane. This chain is SAT4 family membrane protein, found in Emericella nidulans (strain FGSC A4 / ATCC 38163 / CBS 112.46 / NRRL 194 / M139) (Aspergillus nidulans).